The chain runs to 215 residues: Eukaryotic translation initiation factor 4E (215 aa).

The interval 1–27 (MAERDSEPRVNIIRPDDEPEVEEERVP) is disordered. Residue serine 207 is modified to Phosphoserine; by PKC.

This sequence belongs to the eukaryotic initiation factor 4E family. In terms of assembly, eIF4F is a multi-subunit complex, the composition of which varies with external and internal environmental conditions. It is composed of at least eIF4A, eIF4E and eIF4G. eIF4E is also known to interact with other partners. In terms of processing, phosphorylation increases the ability of the protein to bind to mRNA caps and to form the eIF4F complex.

Functionally, recognizes and binds the 7-methylguanosine-containing mRNA cap during an early step in the initiation of protein synthesis and facilitates ribosome binding by inducing the unwinding of the mRNAs secondary structures. The chain is Eukaryotic translation initiation factor 4E from Aplysia californica (California sea hare).